A 324-amino-acid polypeptide reads, in one-letter code: Muscleblind-like protein (324 aa).

C3H1-type zinc fingers lie at residues 38–66 and 72–100; these read WLQV…HPPP and QGRV…HPPQ.

The protein belongs to the muscleblind family. Expressed in neurons around the pharynx.

The protein resides in the nucleus. Its function is as follows. Binds to RNA with repeat sequences 5'-CUG-3' and 5'-CCUG-3'. The sequence is that of Muscleblind-like protein (mbl-1) from Caenorhabditis elegans.